A 129-amino-acid chain; its full sequence is UPF0212 protein MM_2357 (129 aa).

Belongs to the UPF0212 family.

The protein is UPF0212 protein MM_2357 of Methanosarcina mazei (strain ATCC BAA-159 / DSM 3647 / Goe1 / Go1 / JCM 11833 / OCM 88) (Methanosarcina frisia).